The following is a 150-amino-acid chain: MTNIKENYKSKVKTYQPKPPYVWNCVKAFLVGGLICAIGQGLQNFYIHFFDFNEKTAGNPTAATLILISALLTGFGIYDRIGQFAGAGSAVPVTGFANSMASAALEYKSEGLVLGVATNMFKLAGNVIVFGVVAAYIVGMIRFAFEKLMS.

Helical transmembrane passes span 30 to 50, 57 to 77, 84 to 104, and 121 to 141; these read LVGG…IHFF, AGNP…GFGI, FAGA…ASAA, and FKLA…VGMI.

It localises to the cell membrane. This Bacillus subtilis (strain 168) protein is Stage V sporulation protein AC (spoVAC).